Consider the following 419-residue polypeptide: UDP-N-acetylglucosamine 1-carboxyvinyltransferase (419 aa).

22–23 is a phosphoenolpyruvate binding site; sequence KN. R91 is a UDP-N-acetyl-alpha-D-glucosamine binding site. Catalysis depends on C115, which acts as the Proton donor. A 2-(S-cysteinyl)pyruvic acid O-phosphothioketal modification is found at C115. Residues 120 to 124, 160 to 163, D305, and V327 contribute to the UDP-N-acetyl-alpha-D-glucosamine site; these read RPVDL and KVSV.

It belongs to the EPSP synthase family. MurA subfamily.

Its subcellular location is the cytoplasm. It carries out the reaction phosphoenolpyruvate + UDP-N-acetyl-alpha-D-glucosamine = UDP-N-acetyl-3-O-(1-carboxyvinyl)-alpha-D-glucosamine + phosphate. The protein operates within cell wall biogenesis; peptidoglycan biosynthesis. Cell wall formation. Adds enolpyruvyl to UDP-N-acetylglucosamine. This Shigella sonnei (strain Ss046) protein is UDP-N-acetylglucosamine 1-carboxyvinyltransferase.